Consider the following 805-residue polypeptide: Kinesin-like protein Klp10A (805 aa).

The interval 1–274 is globular; it reads MDMITVGQSV…FVPLLDGQAV (274 aa). 2 disordered regions span residues 68 to 94 and 117 to 211; these read QHAAPEPKKQATAPMNLSRNPTQSAIG and IPNP…RRSH. Over residues 80–94 the composition is skewed to polar residues; it reads APMNLSRNPTQSAIG. The segment covering 123 to 136 has biased composition (low complexity); sequence SSNSVNTNSNSNTT. Phosphoserine is present on Ser-157. Polar residues predominate over residues 158-179; the sequence is QAATGQQQTRIASAVPNNTLPN. Positions 180–200 are enriched in low complexity; that stretch reads PSAAASAGPAAQGVATAATTQ. The stretch at 205-244 forms a coiled coil; sequence ASTRRSHALKEVERLKENREKRRARQAEMKEEKVALMNQD. Residues 278 to 610 form the Kinesin motor domain; sequence QITVCVRKRP…LRYADRVKEL (333 aa). 368–375 contributes to the ATP binding site; that stretch reads GQTGSGKT. Thr-630 is modified (phosphothreonine). Residues 633–688 form a disordered region; sequence EEEEELNMVHPHSHQLHPNSHAPASQSNNQRAPASHHSGAVIHNNNNNNNKNGNAG. Polar residues predominate over residues 648-664; the sequence is LHPNSHAPASQSNNQRA. Low complexity predominate over residues 676-688; that stretch reads NNNNNNNKNGNAG. A phosphoserine mark is found at Ser-795, Ser-797, and Ser-800.

Belongs to the TRAFAC class myosin-kinesin ATPase superfamily. Kinesin family. MCAK/KIF2 subfamily. In terms of assembly, interacts with Alms1a (via C-terminus). As to expression, expressed in male germline stem cells and spermatogonia (at protein level).

The protein localises to the cytoplasm. The protein resides in the cytoskeleton. It localises to the microtubule organizing center. Its subcellular location is the centrosome. It is found in the spindle pole. The protein localises to the chromosome. The protein resides in the centromere. Functionally, required during anaphase to drive sister chromatid separation to promote flux by actively depolymerizing kinetochore microtubules at their pole-associated minus ends, thereby moving chromatids through a 'poleward flux'. Involved in asymmetric cell division of sensory organ precursor (SOP) cells by playing a role in the asymmetric localization of Sara-expressing endosomes to the pIIa daughter cell but not to the pIIb cell. Klp98A targets Sara-expressing endosomes to the central spindle which is symmetrically arranged in early cell division. During late cytokinesis, central spindle asymmetry is generated by enrichment of Patronin on the pIIb side which protects microtubules from depolymerization by Klp10A while unprotected microtubules on the pIIa side are disassembled by Klp10A, leading to the asymmetric delivery of Sara-expressing endosomes to the pIIa daughter cell. The polypeptide is Kinesin-like protein Klp10A (Drosophila melanogaster (Fruit fly)).